Consider the following 589-residue polypeptide: PAN2-PAN3 deadenylation complex subunit pan3 (589 aa).

The interval 1 to 32 (MSVRKNSPASPKPTSRSRESSRSPSVTDLKDH) is disordered. Residues 34–63 (KAKRTLCRNILLYGSCKHSENGCAFRHDGP) form a C3H1-type zinc finger. A PABPC-interacting motif-2 (PAM-2) motif is present at residues 74–94 (YSVKKKLNAASASFQPVRALP). The interval 201–457 (EASRQTISAL…NLELFLQNHI (257 aa)) is pseudokinase domain. ATP contacts are provided by residues Lys255 and 302–309 (DFYPCTTT). A coiled-coil region spans residues 458-496 (ESFFPIMSSPYVECEKMERKISDAFQHGRFFNILCKIMF). The knob domain stretch occupies residues 497 to 589 (IIDNNRASRE…DNVYEMEINS (93 aa)).

Belongs to the protein kinase superfamily. PAN3 family. Homodimer. Forms a heterotrimer with a catalytic subunit pan2 to form the poly(A)-nuclease (PAN) deadenylation complex. Interacts (via PAM-2 motif) with poly(A)-binding protein pab1 (via PABC domain), conferring substrate specificity of the enzyme complex.

The protein resides in the cytoplasm. It is found in the nucleus. Functionally, regulatory subunit of the poly(A)-nuclease (PAN) deadenylation complex, one of two cytoplasmic mRNA deadenylases involved in mRNA turnover. PAN specifically shortens poly(A) tails of RNA and the activity is stimulated by poly(A)-binding protein pab1. PAN deadenylation is followed by rapid degradation of the shortened mRNA tails by the CCR4-NOT complex. Deadenylated mRNAs are then degraded by two alternative mechanisms, namely exosome-mediated 3'-5' exonucleolytic degradation, or deadenylation-dependent mRNA decaping and subsequent 5'-3' exonucleolytic degradation by xrn1. May also be involved in post-transcriptional maturation of mRNA poly(A) tails. ppk26/pan3 acts as a positive regulator for PAN activity, recruiting the catalytic subunit pan2 to mRNA via its interaction with RNA and with pab1. The protein is PAN2-PAN3 deadenylation complex subunit pan3 (ppk26) of Schizosaccharomyces pombe (strain 972 / ATCC 24843) (Fission yeast).